Reading from the N-terminus, the 220-residue chain is 7-cyano-7-deazaguanine synthase (220 aa).

ATP is bound at residue 10 to 20 (FSGGQDSTTCL). Zn(2+)-binding residues include Cys186, Cys195, Cys198, and Cys201.

The protein belongs to the QueC family. As to quaternary structure, homodimer. Requires Zn(2+) as cofactor.

The enzyme catalyses 7-carboxy-7-deazaguanine + NH4(+) + ATP = 7-cyano-7-deazaguanine + ADP + phosphate + H2O + H(+). The protein operates within purine metabolism; 7-cyano-7-deazaguanine biosynthesis. Its function is as follows. Catalyzes the ATP-dependent conversion of 7-carboxy-7-deazaguanine (CDG) to 7-cyano-7-deazaguanine (preQ(0)). The chain is 7-cyano-7-deazaguanine synthase from Bacillus cereus (strain ATCC 14579 / DSM 31 / CCUG 7414 / JCM 2152 / NBRC 15305 / NCIMB 9373 / NCTC 2599 / NRRL B-3711).